Consider the following 406-residue polypeptide: Dual-specificity RNA methyltransferase RlmN (406 aa).

Catalysis depends on Glu-121, which acts as the Proton acceptor. The region spanning 127 to 377 is the Radical SAM core domain; the sequence is ERDRGTLCVS…VRTPRGRDIL (251 aa). A disulfide bond links Cys-134 and Cys-380. Positions 141, 145, and 148 each coordinate [4Fe-4S] cluster. Residues 206–207, Ser-238, 260–262, and Asn-337 contribute to the S-adenosyl-L-methionine site; these read GE and SLH. Residue Cys-380 is the S-methylcysteine intermediate of the active site.

The protein belongs to the radical SAM superfamily. RlmN family. [4Fe-4S] cluster serves as cofactor.

It localises to the cytoplasm. It catalyses the reaction adenosine(2503) in 23S rRNA + 2 reduced [2Fe-2S]-[ferredoxin] + 2 S-adenosyl-L-methionine = 2-methyladenosine(2503) in 23S rRNA + 5'-deoxyadenosine + L-methionine + 2 oxidized [2Fe-2S]-[ferredoxin] + S-adenosyl-L-homocysteine. The catalysed reaction is adenosine(37) in tRNA + 2 reduced [2Fe-2S]-[ferredoxin] + 2 S-adenosyl-L-methionine = 2-methyladenosine(37) in tRNA + 5'-deoxyadenosine + L-methionine + 2 oxidized [2Fe-2S]-[ferredoxin] + S-adenosyl-L-homocysteine. Its function is as follows. Specifically methylates position 2 of adenine 2503 in 23S rRNA and position 2 of adenine 37 in tRNAs. m2A2503 modification seems to play a crucial role in the proofreading step occurring at the peptidyl transferase center and thus would serve to optimize ribosomal fidelity. The polypeptide is Dual-specificity RNA methyltransferase RlmN (Azorhizobium caulinodans (strain ATCC 43989 / DSM 5975 / JCM 20966 / LMG 6465 / NBRC 14845 / NCIMB 13405 / ORS 571)).